We begin with the raw amino-acid sequence, 593 residues long: F-box/LRR-repeat protein 17 (593 aa).

Residues 120–177 (DLDLQLDTDIVQPGRFHAVGLWEVLKRLPPSSLLMAARVCKGWRETSRKMWKAAEELR) form the F-box domain. LRR repeat units lie at residues 178–206 (IRVP…SLKI), 207–232 (ESDF…EITT), 237–262 (VNRI…KMEG), 276–304 (LSTL…SLEF), 335–361 (SLKL…SLVL), 362–387 (GINI…DLSG), 414–439 (CPNI…DCGM), 477–502 (LSLW…NLNL), and 503–525 (CSNL…YASG).

As to quaternary structure, part of a SCF (ASK-cullin-F-box) protein ligase complex. Interacts with SKP1A/ASK1, KRP4, KRP6 and KRP7. In terms of tissue distribution, expressed in developing pollen.

It localises to the nucleus. Its pathway is protein modification; protein ubiquitination. In terms of biological role, essential protein for male fertility. Component of the SCF(ASK-cullin-F-box) E3 ubiquitin ligase complex SCF(FBL17), which mediates the ubiquitination and subsequent proteasomal degradation of target proteins. Enables the switch in cell cycle control leading to male germ cell lineage formation from microspores after meiosis. Targets CDKA-1 inhibitors the degradation specifically in male germ cells (e.g. KRP6 and KRP7) and thus enables CDKA-1 activation and germ cell S-phase progression. Promotes twin sperm cell production and double fertilization. This Arabidopsis thaliana (Mouse-ear cress) protein is F-box/LRR-repeat protein 17 (FBL17).